Here is a 450-residue protein sequence, read N- to C-terminus: UDP-N-acetylmuramate--L-alanine ligase (450 aa).

G112 to T118 contacts ATP.

It belongs to the MurCDEF family.

The protein resides in the cytoplasm. It carries out the reaction UDP-N-acetyl-alpha-D-muramate + L-alanine + ATP = UDP-N-acetyl-alpha-D-muramoyl-L-alanine + ADP + phosphate + H(+). It functions in the pathway cell wall biogenesis; peptidoglycan biosynthesis. In terms of biological role, cell wall formation. This Endomicrobium trichonymphae protein is UDP-N-acetylmuramate--L-alanine ligase.